The following is a 444-amino-acid chain: Argininosuccinate synthase (444 aa).

ATP contacts are provided by residues 18 to 26 (AFSGGLDTS) and A44. L-citrulline is bound at residue Y100. The ATP site is built by G130 and T132. T132, N136, and D137 together coordinate L-aspartate. An L-citrulline-binding site is contributed by N136. Residue D137 participates in ATP binding. L-citrulline-binding residues include R140 and S193. D195 contributes to the ATP binding site. L-citrulline-binding residues include T202, E204, and E281.

It belongs to the argininosuccinate synthase family. Type 2 subfamily. Homotetramer.

Its subcellular location is the cytoplasm. The catalysed reaction is L-citrulline + L-aspartate + ATP = 2-(N(omega)-L-arginino)succinate + AMP + diphosphate + H(+). It functions in the pathway amino-acid biosynthesis; L-arginine biosynthesis; L-arginine from L-ornithine and carbamoyl phosphate: step 2/3. In Histophilus somni (strain 2336) (Haemophilus somnus), this protein is Argininosuccinate synthase.